A 666-amino-acid polypeptide reads, in one-letter code: Endogenous retrovirus group K member 9 Gag polyprotein (666 aa).

Glycine 2 carries N-myristoyl glycine lipidation. The segment at 165 to 264 is disordered; the sequence is GKGPELVGPS…APPSRQGSEL (100 aa). Pro residues predominate over residues 232–247; the sequence is GMPPAPQGRAPYPQPP. 2 consecutive CCHC-type zinc fingers follow at residues 544 to 561 and 580 to 597; these read GKCYNCGQIGHLKKNCPV and DLCPRCKKGKHWASQCRS. A disordered region spans residues 598 to 641; it reads KFDKNGQPLSGNEQRGQPQAPQQTGAFPIQPFVPQGFQGQQPPL. The segment covering 604–622 has biased composition (polar residues); it reads QPLSGNEQRGQPQAPQQTG. The segment covering 624-640 has biased composition (low complexity); that stretch reads FPIQPFVPQGFQGQQPP.

The protein belongs to the beta type-B retroviral Gag protein family. HERV class-II K(HML-2) gag subfamily. Myristoylation is essential for retroviral assembly. Alteration of the glycine residue leads to a block in the budding of particles and an accumulation of Gag inside the cell. In terms of processing, specific enzymatic cleavages may yield mature proteins.

It is found in the cell membrane. Its function is as follows. The products of the Gag polyproteins of infectious retroviruses perform highly complex orchestrated tasks during the assembly, budding, maturation, and infection stages of the viral replication cycle. During viral assembly, the proteins form membrane associations and self-associations that ultimately result in budding of an immature virion from the infected cell. Gag precursors also function during viral assembly to selectively bind and package two plus strands of genomic RNA. Endogenous Gag proteins may have kept, lost or modified their original function during evolution. The polypeptide is Endogenous retrovirus group K member 9 Gag polyprotein (ERVK-9) (Homo sapiens (Human)).